The chain runs to 207 residues: Thymidylate kinase (207 aa).

9–16 (GGEGCGKS) contributes to the ATP binding site.

This sequence belongs to the thymidylate kinase family.

The catalysed reaction is dTMP + ATP = dTDP + ADP. Its function is as follows. Phosphorylation of dTMP to form dTDP in both de novo and salvage pathways of dTTP synthesis. The chain is Thymidylate kinase from Dehalococcoides mccartyi (strain ATCC BAA-2266 / KCTC 15142 / 195) (Dehalococcoides ethenogenes (strain 195)).